Reading from the N-terminus, the 118-residue chain is Transcriptional regulator WhiB4 (118 aa).

Positions 36–92 constitute a 4Fe-4S Wbl-type domain; it reads LCRTTDPDELFVRGAAQRKAAVICRHCPVMQECAADALDNKVEFGVWGGMTERQRRA. Cys37, Cys59, Cys62, and Cys68 together coordinate [4Fe-4S] cluster. Cystine bridges form between Cys37/Cys68 and Cys59/Cys62.

This sequence belongs to the WhiB family. Requires [4Fe-4S] cluster as cofactor. The Fe-S cluster can be nitrosylated by nitric oxide (NO). In terms of processing, upon Fe-S cluster removal intramolecular disulfide bonds are formed.

The protein resides in the cytoplasm. Acts as a transcriptional regulator. Probably redox-responsive. The apo- but not holo-form probably binds DNA. The protein is Transcriptional regulator WhiB4 (whiB4) of Mycobacterium tuberculosis (strain CDC 1551 / Oshkosh).